The primary structure comprises 251 residues: Segregation and condensation protein A (251 aa).

Belongs to the ScpA family. As to quaternary structure, component of a cohesin-like complex composed of ScpA, ScpB and the Smc homodimer, in which ScpA and ScpB bind to the head domain of Smc. The presence of the three proteins is required for the association of the complex with DNA.

It is found in the cytoplasm. Participates in chromosomal partition during cell division. May act via the formation of a condensin-like complex containing Smc and ScpB that pull DNA away from mid-cell into both cell halves. This chain is Segregation and condensation protein A, found in Bacillus licheniformis (strain ATCC 14580 / DSM 13 / JCM 2505 / CCUG 7422 / NBRC 12200 / NCIMB 9375 / NCTC 10341 / NRRL NRS-1264 / Gibson 46).